Here is a 115-residue protein sequence, read N- to C-terminus: Androgen-binding protein homolog (115 aa).

The first 23 residues, 1–23 (MKGTLLLLALLVTGELGFQTTEA), serve as a signal peptide directing secretion.

Belongs to the secretoglobin family.

Its subcellular location is the secreted. The chain is Androgen-binding protein homolog from Mesocricetus auratus (Golden hamster).